An 880-amino-acid chain; its full sequence is Leucine--tRNA ligase (880 aa).

Residues 46–56 (PYPSGALHMGH) carry the 'HIGH' region motif. A 'KMSKS' region motif is present at residues 638–642 (KMSKS). K641 is an ATP binding site.

The protein belongs to the class-I aminoacyl-tRNA synthetase family.

Its subcellular location is the cytoplasm. It catalyses the reaction tRNA(Leu) + L-leucine + ATP = L-leucyl-tRNA(Leu) + AMP + diphosphate. This is Leucine--tRNA ligase from Xanthomonas euvesicatoria pv. vesicatoria (strain 85-10) (Xanthomonas campestris pv. vesicatoria).